The sequence spans 237 residues: Small ribosomal subunit protein eS4 (237 aa).

The region spanning I37–P100 is the S4 RNA-binding domain.

It belongs to the eukaryotic ribosomal protein eS4 family.

The polypeptide is Small ribosomal subunit protein eS4 (Caldivirga maquilingensis (strain ATCC 700844 / DSM 13496 / JCM 10307 / IC-167)).